The chain runs to 107 residues: MGKIRKNDTVVVLSGDDKGKQGAVLELIPAKKAAIVKGVNIKTKHRKPSNKNTSGEIITFEAPILLSKLALVAKKATKDKPAIPTRVGFKIENKKKIRIAKKTGKAI.

It belongs to the universal ribosomal protein uL24 family. In terms of assembly, part of the 50S ribosomal subunit.

Functionally, one of two assembly initiator proteins, it binds directly to the 5'-end of the 23S rRNA, where it nucleates assembly of the 50S subunit. In terms of biological role, one of the proteins that surrounds the polypeptide exit tunnel on the outside of the subunit. The sequence is that of Large ribosomal subunit protein uL24 from Mesomycoplasma hyopneumoniae (strain J / ATCC 25934 / NCTC 10110) (Mycoplasma hyopneumoniae).